The chain runs to 382 residues: 2-carboxy-1,4-naphthoquinone phytyltransferase, chloroplastic (382 aa).

A chloroplast-targeting transit peptide spans 1–66; sequence MVNFVSLCDI…RRNLRVRPIF (66 aa). 8 helical membrane-spanning segments follow: residues 99–119, 123–143, 168–188, 196–216, 224–244, 257–277, 323–343, and 361–381; these read VALV…GLFL, YVTL…SNDV, TLAA…WTSL, ILLL…PFRL, PLCF…LLGS, VLSS…CSHF, ILPL…NLVS, and YYCV…LVIA.

The protein belongs to the MenA family. Type 2 subfamily.

Its subcellular location is the plastid. The protein localises to the chloroplast membrane. It carries out the reaction 2-carboxy-1,4-naphthoquinone + phytyl diphosphate + H(+) = demethylphylloquinone + CO2 + diphosphate. Its function is as follows. Involved in the synthesis of phylloquinone (vitamin K1). Catalyzes the transfer of a prenyl chain to 2-carboxy-1,4-naphthoquinone. This chain is 2-carboxy-1,4-naphthoquinone phytyltransferase, chloroplastic (ABC4), found in Arabidopsis thaliana (Mouse-ear cress).